Here is a 523-residue protein sequence, read N- to C-terminus: DNA primase (523 aa).

The CHC2-type zinc-finger motif lies at 37 to 61 (CPFHAEKTPSFFVNPLQGYFYCFGC). One can recognise a Toprim domain in the interval 259 to 340 (KSVILVEGYI…NVSVVRMDFG (82 aa)). Residues Glu265, Asp309, and Asp311 each contribute to the Mg(2+) site.

It belongs to the DnaG primase family. In terms of assembly, monomer. Interacts with DnaB. The cofactor is Zn(2+). It depends on Mg(2+) as a cofactor.

It catalyses the reaction ssDNA + n NTP = ssDNA/pppN(pN)n-1 hybrid + (n-1) diphosphate.. RNA polymerase that catalyzes the synthesis of short RNA molecules used as primers for DNA polymerase during DNA replication. This chain is DNA primase, found in Borreliella burgdorferi (strain ATCC 35210 / DSM 4680 / CIP 102532 / B31) (Borrelia burgdorferi).